The chain runs to 550 residues: Spermatogenesis-associated protein 2 (550 aa).

The PUB domain occupies 83-156; sequence TVGTAFATLE…YNVRDHPGGA (74 aa). The PIM motif signature appears at 320-337; that stretch reads YHLSSLDEVDLYTERGLG. The disordered stretch occupies residues 457–480; that stretch reads SKPVGSGPSPVGSLVSSGSSSSGG.

The protein belongs to the SPATA2 family.

The protein localises to the cytoplasm. It is found in the nucleus. Bridging factor that mediates the recruitment of cyld to the LUBAC complex, thereby regulating TNF-alpha-induced necroptosis. Required to activate the 'Met-1'- (linear) and 'Lys-63'-linked deubiquitinase activities of cyld. This is Spermatogenesis-associated protein 2 from Danio rerio (Zebrafish).